A 239-amino-acid polypeptide reads, in one-letter code: Small ribosomal subunit protein uS2 (239 aa).

The protein belongs to the universal ribosomal protein uS2 family.

The polypeptide is Small ribosomal subunit protein uS2 (Francisella tularensis subsp. tularensis (strain FSC 198)).